The chain runs to 1128 residues: Large proline-rich protein BAG6 (1128 aa).

M1 carries the post-translational modification N-acetylmethionine. Residues 17 to 92 form the Ubiquitin-like domain; that stretch reads LEVLVKTLDS…HLVERAPPQT (76 aa). 5 disordered regions span residues 87–126, 185–267, 380–435, 456–523, and 555–598; these read RAPPQTQLPSGASSGTGSASATHGGGPPPGTRGPGASVHD, CRGG…NHPS, VTMT…AASH, IQDS…ALPG, and PGMA…SASD. Low complexity predominate over residues 95 to 108; the sequence is PSGASSGTGSASAT. A Phosphoserine modification is found at S96. T117 carries the post-translational modification Phosphothreonine. The segment covering 189–201 has biased composition (polar residues); that stretch reads SQAQHSQPPSQMP. Repeat unit 1 spans residues 236–265; sequence RASAQSPGLSPSGPAPAGPTPAPETNAPNH. The segment at 236-630 is 4 X 29 AA approximate repeats; it reads RASAQSPGLS…MTSPTITVAM (395 aa). Low complexity predominate over residues 238–247; the sequence is SAQSPGLSPS. Pro residues-rich tracts occupy residues 248-257 and 388-402; these read GPAPAGPTPA and RPPPTPNAEAPPPGP. Positions 403–412 are enriched in low complexity; that stretch reads GQASSLAPSS. The stretch at 410–438 is repeat 2; sequence PSSTTVESSTEGAPPPGPAPPPAASHPRV. Pro residues-rich tracts occupy residues 422 to 433 and 502 to 515; these read APPPGPAPPPAA and PTPPQSRPSHPGGP. Low complexity predominate over residues 564–581; it reads ATASASAGTTNTATTAGP. 2 tandem repeats follow at residues 569–596 and 602–630. The span at 583–594 shows a compositional bias: pro residues; it reads PGGPAQPPPPQP. Disordered regions lie at residues 648–689 and 939–1128; these read QTAA…GLGP and VGDP…AEDP. A compositionally biased stretch (pro residues) spans 652–677; it reads PPAPPPPPPPPPPAPEQQTAPPPGSP. Residues 678-688 show a composition bias toward gly residues; it reads PGGAGSPGGLG. Residues S960 and S969 each carry the phosphoserine modification. Positions 999-1016 are enriched in low complexity; that stretch reads AAAETEPWAAAVPPEWVP. Positions 1006–1036 are required for interaction with GET4; it reads WAAAVPPEWVPIIQQDIQSQRKVKPQPPLSD. The Nuclear localization site signature appears at 1008–1050; sequence AAVPPEWVPIIQQDIQSQRKVKPQPPLSDAYLSGMPAKRRKTM. The interval 1018-1128 is sufficient for the delivery of client proteins to the endoplasmic reticulum; sequence IQQDIQSQRK…NAHRAFAEDP (111 aa). Phosphothreonine is present on T1049. The segment at 1054–1111 is BAG-similar domain, required and sufficient for interaction with UBL4A; the sequence is GPQLLLSEAVSRAAKAAGARPLTSPESLSRDLEAPEVQESYRQQLRADIQKRLQEDPN. A compositionally biased stretch (low complexity) spans 1062–1072; sequence AVSRAAKAAGA. S1077 and S1113 each carry phosphoserine.

As to quaternary structure, component of the BAG6/BAT3 complex, also named BAT3 complex, at least composed of BAG6, UBL4A and GET4/TRC35. Interacts with GET4; the interaction is direct and localizes BAG6 in the cytosol. Interacts with UBL4A; the interaction is direct and required for UBL4A protein stability. Interacts with AIFM1. Interacts with HSPA2. Interacts with CTCFL. Interacts with p300/EP300. Interacts (via ubiquitin-like domain) with RNF126; required for BAG6-dependent ubiquitination of proteins mislocalized to the cytosol. Interacts (via ubiquitin-like domain) with SGTA; SGTA competes with RNF126 by binding the same region of BAG6, thereby promoting deubiquitination of BAG6-target proteins and rescuing them from degradation. Interacts with ricin A chain. Interacts with VCP and AMFR; both form the VCP/p97-AMFR/gp78 complex. Interacts with SYVN1. Interacts with USP13; the interaction is direct and may mediate UBL4A deubiquitination. Interacts with ZFAND2B. Interacts with KPNA2. Interacts with UBQLN4. Post-translationally, ricin can induce a cleavage by the caspase CASP3. The released C-terminal peptide induces apoptosis.

It is found in the cytoplasm. The protein localises to the cytosol. It localises to the nucleus. The protein resides in the secreted. Its subcellular location is the extracellular exosome. ATP-independent molecular chaperone preventing the aggregation of misfolded and hydrophobic patches-containing proteins. Functions as part of a cytosolic protein quality control complex, the BAG6/BAT3 complex, which maintains these client proteins in a soluble state and participates in their proper delivery to the endoplasmic reticulum or alternatively can promote their sorting to the proteasome where they undergo degradation. The BAG6/BAT3 complex is involved in the post-translational delivery of tail-anchored/type II transmembrane proteins to the endoplasmic reticulum membrane. Recruited to ribosomes, it interacts with the transmembrane region of newly synthesized tail-anchored proteins and together with SGTA and ASNA1 mediates their delivery to the endoplasmic reticulum. Client proteins that cannot be properly delivered to the endoplasmic reticulum are ubiquitinated by RNF126, an E3 ubiquitin-protein ligase associated with BAG6 and are sorted to the proteasome. SGTA which prevents the recruitment of RNF126 to BAG6 may negatively regulate the ubiquitination and the proteasomal degradation of client proteins. Similarly, the BAG6/BAT3 complex also functions as a sorting platform for proteins of the secretory pathway that are mislocalized to the cytosol either delivering them to the proteasome for degradation or to the endoplasmic reticulum. The BAG6/BAT3 complex also plays a role in the endoplasmic reticulum-associated degradation (ERAD), a quality control mechanism that eliminates unwanted proteins of the endoplasmic reticulum through their retrotranslocation to the cytosol and their targeting to the proteasome. It maintains these retrotranslocated proteins in an unfolded yet soluble state condition in the cytosol to ensure their proper delivery to the proteasome. BAG6 is also required for selective ubiquitin-mediated degradation of defective nascent chain polypeptides by the proteasome. In this context, it may participate in the production of antigenic peptides and play a role in antigen presentation in immune response. BAG6 is also involved in endoplasmic reticulum stress-induced pre-emptive quality control, a mechanism that selectively attenuates the translocation of newly synthesized proteins into the endoplasmic reticulum and reroutes them to the cytosol for proteasomal degradation. BAG6 may ensure the proper degradation of these proteins and thereby protects the endoplasmic reticulum from protein overload upon stress. By inhibiting the polyubiquitination and subsequent proteasomal degradation of HSPA2 it may also play a role in the assembly of the synaptonemal complex during spermatogenesis. Also positively regulates apoptosis by interacting with and stabilizing the proapoptotic factor AIFM1. By controlling the steady-state expression of the IGF1R receptor, indirectly regulates the insulin-like growth factor receptor signaling pathway. Its function is as follows. Involved in DNA damage-induced apoptosis: following DNA damage, accumulates in the nucleus and forms a complex with p300/EP300, enhancing p300/EP300-mediated p53/TP53 acetylation leading to increase p53/TP53 transcriptional activity. When nuclear, may also act as a component of some chromatin regulator complex that regulates histone 3 'Lys-4' dimethylation (H3K4me2). In terms of biological role, released extracellularly via exosomes, it is a ligand of the natural killer/NK cells receptor NCR3 and stimulates NK cells cytotoxicity. It may thereby trigger NK cells cytotoxicity against neighboring tumor cells and immature myeloid dendritic cells (DC). Functionally, may mediate ricin-induced apoptosis. This is Large proline-rich protein BAG6 from Sus scrofa (Pig).